Here is a 480-residue protein sequence, read N- to C-terminus: Glutamate--tRNA ligase (480 aa).

The short motif at 21–31 is the 'HIGH' region element; that stretch reads PSPTGYLHVGG. The Zn(2+) site is built by cysteine 110, cysteine 112, cysteine 137, and histidine 139. Residues 248 to 252 carry the 'KMSKS' region motif; it reads KLSKR. Lysine 251 contacts ATP.

The protein belongs to the class-I aminoacyl-tRNA synthetase family. Glutamate--tRNA ligase type 1 subfamily. Monomer. The cofactor is Zn(2+).

The protein resides in the cytoplasm. It carries out the reaction tRNA(Glu) + L-glutamate + ATP = L-glutamyl-tRNA(Glu) + AMP + diphosphate. In terms of biological role, catalyzes the attachment of glutamate to tRNA(Glu) in a two-step reaction: glutamate is first activated by ATP to form Glu-AMP and then transferred to the acceptor end of tRNA(Glu). In Mannheimia succiniciproducens (strain KCTC 0769BP / MBEL55E), this protein is Glutamate--tRNA ligase.